The primary structure comprises 158 residues: uncharacterized protein (158 aa).

Positions 1 to 21 (MPHTGSQHTLQATPKTAQHTG) are enriched in polar residues. 2 disordered regions span residues 1–89 (MPHT…RVEG) and 107–158 (EEEK…DAKT). Basic and acidic residues-rich tracts occupy residues 51–68 (HTEG…DKAG) and 107–127 (EEEK…RESR). Polar residues predominate over residues 128–137 (QGTAHKSTCM). Basic and acidic residues predominate over residues 149-158 (EIGKVEDAKT).

This is an uncharacterized protein from Encephalitozoon cuniculi (strain GB-M1) (Microsporidian parasite).